Reading from the N-terminus, the 141-residue chain is HTH-type transcriptional repressor NsrR (141 aa).

Residues Q2–E129 enclose the HTH rrf2-type domain. Positions I28–R51 form a DNA-binding region, H-T-H motif. C91, C96, and C102 together coordinate [2Fe-2S] cluster.

It depends on [2Fe-2S] cluster as a cofactor.

Nitric oxide-sensitive repressor of genes involved in protecting the cell against nitrosative stress. May require iron for activity. This is HTH-type transcriptional repressor NsrR from Klebsiella pneumoniae subsp. pneumoniae (strain ATCC 700721 / MGH 78578).